A 529-amino-acid polypeptide reads, in one-letter code: VIN3-like protein 3 (529 aa).

Positions 97–104 match the Nuclear localization signal motif; sequence PKRQKRDL. The segment at 137–207 adopts a PHD-type zinc-finger fold; that stretch reads RCSCCICFKY…CFNCVSCGKT (71 aa). The short motif at 214-221 is the Nuclear localization signal element; the sequence is LKKQLIIA. Residues 312–411 form the Fibronectin type-III domain; it reads GSMKIRIESV…FIVSTKTLQD (100 aa). A VIN3-Interacting Domain (VID) region spans residues 421 to 529; that stretch reads MSNCNNANKM…AGVSLILLQD (109 aa).

As to quaternary structure, interacts with VIN3.

The protein localises to the nucleus. In terms of biological role, involved in both the vernalization and photoperiod pathways by regulating gene expression. This Arabidopsis thaliana (Mouse-ear cress) protein is VIN3-like protein 3 (VIL3).